The primary structure comprises 228 residues: uncharacterized protein (228 aa).

The N-terminal stretch at 1–28 (MRKKRVITCVMAASLTLGSLLPAGYASA) is a signal peptide.

This is an uncharacterized protein from Bacillus subtilis (strain 168).